The following is a 397-amino-acid chain: MTNASEMPRKLTILGSTGSIGTNTLDVVRQLGGRDGFEIMALTGAGNIALLAEQAREFGAQLAVTADDDKYEALKSALAGTGIKVAAGMAGLEEAASMDAGWVMAAIAGTPGLAPTLTAARRGADIALANKECLVSAGDVFLRTVKQGGGRLIPVDSEHSAIFQCLTGEYKQAVERIVLTASGGPFRTWSRDEMSNVTADIARAHPNWSMGLKVSIGSASMFNKGLEMIEAKYLFDLRPDQVDVIVHPQSIIHSMVGYTDGSYIAQLGSPDMRTAISYALTYPERGNLSVERLDFAKLARLDFEAPDEARFPALRLARMALERGGLQGAALNAAEETAFHAFVAGGIGFLDMAEIVETVMDRMHDGRTAETMDDVFSADEEARRHALELIATKEKAA.

7 residues coordinate NADPH: Thr17, Gly18, Ser19, Ile20, Ala45, Asn47, and Asn130. A 1-deoxy-D-xylulose 5-phosphate-binding site is contributed by Lys131. Residue Glu132 coordinates NADPH. A Mn(2+)-binding site is contributed by Asp156. 1-deoxy-D-xylulose 5-phosphate-binding residues include Ser157, Glu158, Ser182, and His205. Residue Glu158 participates in Mn(2+) binding. Gly211 provides a ligand contact to NADPH. Residues Ser218, Asn223, Lys224, and Glu227 each contribute to the 1-deoxy-D-xylulose 5-phosphate site. Glu227 contacts Mn(2+).

It belongs to the DXR family. Mg(2+) is required as a cofactor. Requires Mn(2+) as cofactor.

The enzyme catalyses 2-C-methyl-D-erythritol 4-phosphate + NADP(+) = 1-deoxy-D-xylulose 5-phosphate + NADPH + H(+). Its pathway is isoprenoid biosynthesis; isopentenyl diphosphate biosynthesis via DXP pathway; isopentenyl diphosphate from 1-deoxy-D-xylulose 5-phosphate: step 1/6. Its function is as follows. Catalyzes the NADPH-dependent rearrangement and reduction of 1-deoxy-D-xylulose-5-phosphate (DXP) to 2-C-methyl-D-erythritol 4-phosphate (MEP). This Agrobacterium fabrum (strain C58 / ATCC 33970) (Agrobacterium tumefaciens (strain C58)) protein is 1-deoxy-D-xylulose 5-phosphate reductoisomerase.